We begin with the raw amino-acid sequence, 652 residues long: Phosphoglucomutase 1, chloroplastic (652 aa).

The transit peptide at 1–84 directs the protein to the chloroplast; it reads MAFSAAASAS…LAARRTLRVR (84 aa). Alpha-D-glucose 1,6-bisphosphate-binding residues include R118 and S211. Residue S211 is the Phosphoserine intermediate of the active site. Residues S211, D376, D378, and D380 each coordinate Mg(2+). A Phosphoserine modification is found at S211. Alpha-D-glucose 1,6-bisphosphate-binding residues include D380, R381, T443, E462, S464, and K475.

It belongs to the phosphohexose mutase family. The cofactor is Mg(2+).

It is found in the plastid. The protein localises to the chloroplast. It carries out the reaction alpha-D-glucose 1-phosphate = alpha-D-glucose 6-phosphate. The enzyme catalyses O-phospho-L-seryl-[protein] + alpha-D-glucose 1-phosphate = alpha-D-glucose 1,6-bisphosphate + L-seryl-[protein]. It catalyses the reaction alpha-D-glucose 1,6-bisphosphate + L-seryl-[protein] = O-phospho-L-seryl-[protein] + alpha-D-glucose 6-phosphate. Inhibited by the Calvin cycle intermediates fructose-1,6-bisphosphate and ribulose-1,5-bisphosphate. Its function is as follows. Catalyzes the reversible isomerization of alpha-D-glucose 1-phosphate to alpha-D-glucose 6-phosphate. The mechanism proceeds via the intermediate compound alpha-D-glucose 1,6-bisphosphate. This enzyme participates in both the breakdown and synthesis of glucose. Required for sucrose production and accumulation necessary during plant development. Promotes gravitropic responses, negative in shoots but positive in roots, by facilitating starch granules (statoliths) formation. This chain is Phosphoglucomutase 1, chloroplastic, found in Marchantia polymorpha (Common liverwort).